The following is an 895-amino-acid chain: Probable inorganic carbon transporter subunit DabA 1 (895 aa).

Zn(2+) is bound by residues Cys398, Asp400, His581, and Cys596.

Belongs to the inorganic carbon transporter (TC 9.A.2) DabA family. Forms a complex with DabB. Requires Zn(2+) as cofactor.

It is found in the cell inner membrane. In terms of biological role, part of an energy-coupled inorganic carbon pump. The sequence is that of Probable inorganic carbon transporter subunit DabA 1 from Rhodopirellula baltica (strain DSM 10527 / NCIMB 13988 / SH1).